A 222-amino-acid chain; its full sequence is Putative N-acetylmannosamine-6-phosphate 2-epimerase (222 aa).

The protein belongs to the NanE family.

The catalysed reaction is an N-acyl-D-glucosamine 6-phosphate = an N-acyl-D-mannosamine 6-phosphate. It participates in amino-sugar metabolism; N-acetylneuraminate degradation; D-fructose 6-phosphate from N-acetylneuraminate: step 3/5. Functionally, converts N-acetylmannosamine-6-phosphate (ManNAc-6-P) to N-acetylglucosamine-6-phosphate (GlcNAc-6-P). This Staphylococcus aureus (strain USA300) protein is Putative N-acetylmannosamine-6-phosphate 2-epimerase.